The primary structure comprises 271 residues: MWIDCKTIARSIEERTKERVEKLGFTPKLVSVACTDDPSALSYLKSQRKKAEKLGIAFEIMNVSPEEIVSTLKKLGSDESVNGVFVARPFPLGLDEKEILSSVPVEKDVEGVNPANLGLLLYDEEIFPPCTAEAAVRILERETNLSGKRVTVVGRSVTVGKPLALMLLKKGRDATVTVCHSRTVNLEEITKNSDIVVVAVGRAHFLKKNMVKEGAIVIDVGINYVDGKLQGDVDPSVEEIARVTPVPGGVGQVTTALLFEHVVRAAERQRK.

Residues glycine 154–serine 156, serine 181, and isoleucine 222 contribute to the NADP(+) site.

The protein belongs to the tetrahydrofolate dehydrogenase/cyclohydrolase family. As to quaternary structure, homodimer.

It carries out the reaction (6R)-5,10-methylene-5,6,7,8-tetrahydrofolate + NADP(+) = (6R)-5,10-methenyltetrahydrofolate + NADPH. It catalyses the reaction (6R)-5,10-methenyltetrahydrofolate + H2O = (6R)-10-formyltetrahydrofolate + H(+). It functions in the pathway one-carbon metabolism; tetrahydrofolate interconversion. Catalyzes the oxidation of 5,10-methylenetetrahydrofolate to 5,10-methenyltetrahydrofolate and then the hydrolysis of 5,10-methenyltetrahydrofolate to 10-formyltetrahydrofolate. This chain is Bifunctional protein FolD, found in Thermotoga maritima (strain ATCC 43589 / DSM 3109 / JCM 10099 / NBRC 100826 / MSB8).